We begin with the raw amino-acid sequence, 816 residues long: Mitogen-activated protein kinase 7 (816 aa).

Residues 1–26 (MAEPLKEEDGEDGSAEPPGPVKAEPA) are disordered. Position 2 is an N-acetylalanine (alanine 2). Residues 2 to 77 (AEPLKEEDGE…VVSSARRRLT (76 aa)) form a required for cytoplasmic targeting region. The Protein kinase domain maps to 55-347 (YEIIETIGNG…AAAALRHPFL (293 aa)). Residues 61–69 (IGNGAYGVV) and lysine 84 each bind ATP. Residues 78 to 139 (GQQVAIKKIP…FKSVYVVLDL (62 aa)) form a required for binding to MAP2K5 region. Residues 140–406 (MESDLHQIIH…QQIRFQPSLQ (267 aa)) form a necessary for oligomerization region. The Proton acceptor role is filled by aspartate 182. Residues 219-221 (TEY) carry the TXY motif. A disordered region spans residues 406–737 (QPVASEPGCP…PVFSGTPKGS (332 aa)). A may not be required for kinase activity; required to stimulate MEF2C activity region spans residues 407-806 (PVASEPGCPD…REIQMDSPML (400 aa)). Pro residues-rich tracts occupy residues 433 to 445 (SPPP…PGPA) and 454 to 463 (QPPPPVSEPA). Residues 476–486 (KAALKAALLKS) show a composition bias toward low complexity. 3 stretches are compositionally biased toward basic and acidic residues: residues 502–519 (PEPR…EREE), 527–544 (RAKE…KERG), and 563–573 (DNDRSLLERWT). Residues 505–539 (RKPVTAQERQREREEKRRRRQERAKEREKRRQERE) carry the Nuclear localization signal motif. A compositionally biased stretch (low complexity) spans 578–587 (PAAPALTSVP). 2 stretches are compositionally biased toward pro residues: residues 588–610 (APAP…PGPV) and 628–655 (VPQP…PAPP). The segment covering 676 to 685 (PGSSTPGVLP) has biased composition (low complexity). The segment covering 686–695 (YFPPGLPPPD) has biased composition (pro residues). Positions 701-720 (QSSMSESPDVNLVTQQLSKS) are enriched in polar residues. Position 720 is a phosphoserine (serine 720). Threonine 733 is modified (phosphothreonine).

Belongs to the protein kinase superfamily. CMGC Ser/Thr protein kinase family. MAP kinase subfamily. Interacts with MAP2K5. Forms oligomers. Interacts with MEF2A, MEF2C and MEF2D; the interaction phosphorylates the MEF2s and enhances transcriptional activity of MEF2A, MEF2C but not MEF2D. Interacts with SGK1. Preferentially interacts with PML isoform PML-4 but shows interaction also with its other isoforms: isoform PML-1, isoform PML-2, isoform PML-3 and isoform PML-6. Interacts (via N-terminal half) with HSP90AB1-CDC37 chaperone complex in resting cells; the interaction is MAP2K5-independent and prevents MAPK7 from ubiquitination and proteasomal degradation. Interacts with STUB1/CHIP; the interaction is enhanced in the presence of IGF1 or MAP2K5 and promotes STUB1/CHIP E3 ligase activity. Requires Mg(2+) as cofactor. In terms of processing, dually phosphorylated on Thr-219 and Tyr-221, which activates the enzyme. Autophosphorylated in vitro on threonine and tyrosine residues when the C-terminal part of the kinase, which could have a regulatory role, is absent. Expressed in many adult tissues. Abundant in heart, placenta, lung, kidney and skeletal muscle. Not detectable in liver.

It localises to the cytoplasm. Its subcellular location is the nucleus. The protein resides in the PML body. It catalyses the reaction L-seryl-[protein] + ATP = O-phospho-L-seryl-[protein] + ADP + H(+). The enzyme catalyses L-threonyl-[protein] + ATP = O-phospho-L-threonyl-[protein] + ADP + H(+). Its activity is regulated as follows. Activated by tyrosine and threonine phosphorylation. Activated in response to hyperosmolarity, hydrogen peroxide, and epidermal growth factor (EGF). Plays a role in various cellular processes such as proliferation, differentiation and cell survival. The upstream activator of MAPK7 is the MAPK kinase MAP2K5. Upon activation, it translocates to the nucleus and phosphorylates various downstream targets including MEF2C. EGF activates MAPK7 through a Ras-independent and MAP2K5-dependent pathway. As part of the MAPK/ERK signaling pathway, acts as a negative regulator of apoptosis in cardiomyocytes via interaction with STUB1/CHIP and promotion of STUB1-mediated ubiquitination and degradation of ICER-type isoforms of CREM. May have a role in muscle cell differentiation. May be important for endothelial function and maintenance of blood vessel integrity. MAP2K5 and MAPK7 interact specifically with one another and not with MEK1/ERK1 or MEK2/ERK2 pathways. Phosphorylates SGK1 at Ser-78 and this is required for growth factor-induced cell cycle progression. Involved in the regulation of p53/TP53 by disrupting the PML-MDM2 interaction. The polypeptide is Mitogen-activated protein kinase 7 (MAPK7) (Homo sapiens (Human)).